The chain runs to 204 residues: N-(5'-phosphoribosyl)anthranilate isomerase (204 aa).

This sequence belongs to the TrpF family.

The catalysed reaction is N-(5-phospho-beta-D-ribosyl)anthranilate = 1-(2-carboxyphenylamino)-1-deoxy-D-ribulose 5-phosphate. It functions in the pathway amino-acid biosynthesis; L-tryptophan biosynthesis; L-tryptophan from chorismate: step 3/5. The sequence is that of N-(5'-phosphoribosyl)anthranilate isomerase from Geobacter sp. (strain M21).